A 98-amino-acid chain; its full sequence is NADH-ubiquinone oxidoreductase chain 4L (98 aa).

3 helical membrane passes run 1–21 (MTST…GILI), 29–49 (ILLC…VWAI), and 61–81 (LILL…MVAL).

It belongs to the complex I subunit 4L family.

It localises to the mitochondrion membrane. It catalyses the reaction a ubiquinone + NADH + 5 H(+)(in) = a ubiquinol + NAD(+) + 4 H(+)(out). In terms of biological role, core subunit of the mitochondrial membrane respiratory chain NADH dehydrogenase (Complex I) that is believed to belong to the minimal assembly required for catalysis. Complex I functions in the transfer of electrons from NADH to the respiratory chain. The immediate electron acceptor for the enzyme is believed to be ubiquinone. This Patiria pectinifera (Starfish) protein is NADH-ubiquinone oxidoreductase chain 4L (ND4L).